Consider the following 370-residue polypeptide: Anhydro-N-acetylmuramic acid kinase (370 aa).

ATP is bound at residue 13–20 (GTSMDGID).

It belongs to the anhydro-N-acetylmuramic acid kinase family.

The enzyme catalyses 1,6-anhydro-N-acetyl-beta-muramate + ATP + H2O = N-acetyl-D-muramate 6-phosphate + ADP + H(+). Its pathway is amino-sugar metabolism; 1,6-anhydro-N-acetylmuramate degradation. It participates in cell wall biogenesis; peptidoglycan recycling. Functionally, catalyzes the specific phosphorylation of 1,6-anhydro-N-acetylmuramic acid (anhMurNAc) with the simultaneous cleavage of the 1,6-anhydro ring, generating MurNAc-6-P. Is required for the utilization of anhMurNAc either imported from the medium or derived from its own cell wall murein, and thus plays a role in cell wall recycling. This is Anhydro-N-acetylmuramic acid kinase from Rhizobium etli (strain ATCC 51251 / DSM 11541 / JCM 21823 / NBRC 15573 / CFN 42).